The chain runs to 385 residues: Cytochrome b (385 aa).

Helical transmembrane passes span M32–M52, W76–A98, V113–C133, and F179–M199. Heme b is bound by residues H82 and H96. Residues H183 and H197 each coordinate heme b. H202 is a binding site for a ubiquinone. Transmembrane regions (helical) follow at residues F225–F245, L289–D309, I321–S341, and F348–P368.

Belongs to the cytochrome b family. In terms of assembly, fungal cytochrome b-c1 complex contains 10 subunits; 3 respiratory subunits, 2 core proteins and 5 low-molecular weight proteins. Cytochrome b-c1 complex is a homodimer. The cofactor is heme b.

It localises to the mitochondrion inner membrane. Functionally, component of the ubiquinol-cytochrome c reductase complex (complex III or cytochrome b-c1 complex) that is part of the mitochondrial respiratory chain. The b-c1 complex mediates electron transfer from ubiquinol to cytochrome c. Contributes to the generation of a proton gradient across the mitochondrial membrane that is then used for ATP synthesis. The protein is Cytochrome b (COB) of Monosporozyma servazzii (Yeast).